Here is a 207-residue protein sequence, read N- to C-terminus: Protein GrpE (207 aa).

It belongs to the GrpE family. Homodimer.

The protein resides in the cytoplasm. Its function is as follows. Participates actively in the response to hyperosmotic and heat shock by preventing the aggregation of stress-denatured proteins, in association with DnaK and GrpE. It is the nucleotide exchange factor for DnaK and may function as a thermosensor. Unfolded proteins bind initially to DnaJ; upon interaction with the DnaJ-bound protein, DnaK hydrolyzes its bound ATP, resulting in the formation of a stable complex. GrpE releases ADP from DnaK; ATP binding to DnaK triggers the release of the substrate protein, thus completing the reaction cycle. Several rounds of ATP-dependent interactions between DnaJ, DnaK and GrpE are required for fully efficient folding. This Pelodictyon phaeoclathratiforme (strain DSM 5477 / BU-1) protein is Protein GrpE.